We begin with the raw amino-acid sequence, 315 residues long: Homoserine kinase (315 aa).

97 to 107 contributes to the ATP binding site; sequence PPARGLGSSAT.

Belongs to the GHMP kinase family. Homoserine kinase subfamily.

It localises to the cytoplasm. The enzyme catalyses L-homoserine + ATP = O-phospho-L-homoserine + ADP + H(+). Its pathway is amino-acid biosynthesis; L-threonine biosynthesis; L-threonine from L-aspartate: step 4/5. Functionally, catalyzes the ATP-dependent phosphorylation of L-homoserine to L-homoserine phosphate. The chain is Homoserine kinase from Prochlorococcus marinus (strain MIT 9312).